We begin with the raw amino-acid sequence, 627 residues long: tRNA uridine 5-carboxymethylaminomethyl modification enzyme MnmG (627 aa).

FAD-binding positions include 16–21 (GAGHAG), V128, and S183. An NAD(+)-binding site is contributed by 275–289 (GPRYCPSIEDKVMRF). Residue Q372 coordinates FAD.

The protein belongs to the MnmG family. In terms of assembly, homodimer. Heterotetramer of two MnmE and two MnmG subunits. FAD is required as a cofactor.

The protein resides in the cytoplasm. In terms of biological role, NAD-binding protein involved in the addition of a carboxymethylaminomethyl (cmnm) group at the wobble position (U34) of certain tRNAs, forming tRNA-cmnm(5)s(2)U34. In Geobacter sulfurreducens (strain ATCC 51573 / DSM 12127 / PCA), this protein is tRNA uridine 5-carboxymethylaminomethyl modification enzyme MnmG.